A 111-amino-acid polypeptide reads, in one-letter code: WAP four-disulfide core domain protein 12 (111 aa).

The N-terminal stretch at 1–23 (MGSSSFLVLMVSLALVTLVAAEG) is a signal peptide. Positions 27-74 (NIEKPGVCPADNIRCIKSDPPQCHTDQDCQGIRKCCYLHCGFKCVIPV) constitute a WAP domain. 4 disulfide bridges follow: C34–C62, C41–C66, C49–C61, and C55–C70. The disordered stretch occupies residues 80-111 (GGNKDEDVSRPCPEPGWEAKPPGVFSTRCPQK).

Its subcellular location is the secreted. In terms of biological role, antibacterial protein. Putative acid-stable proteinase inhibitor. The sequence is that of WAP four-disulfide core domain protein 12 (WFDC12) from Callithrix jacchus (White-tufted-ear marmoset).